Consider the following 276-residue polypeptide: Aquaporin-1 (276 aa).

At 1-10 (MLDAEQKKNY) the chain is on the cytoplasmic side. The helical transmembrane segment at 11 to 31 (VAGAFGEFVGTAYFLFMGVGG) threads the bilayer. Residues 32–46 (AVNFLNNAAGSPLPG) lie on the Extracellular side of the membrane. A helical transmembrane segment spans residues 47–67 (FAIPFCFGFSLFVNVFIWAPI). Residues 68–93 (SGGVFNPSITIALMATNPKDFPWYRG) lie on the Cytoplasmic side of the membrane. The NPA 1 signature appears at 73-75 (NPS). Residues 94–114 (ILYIVSQFLGALFGSWLIDLI) form a helical membrane-spanning segment. Over 115–133 (QPEAPNAATLLADGVSVAQ) the chain is Extracellular. A helical membrane pass occupies residues 134–154 (GLFMEMFATSVLTMAVLILAG). Residues 155–159 (ERYGK) lie on the Cytoplasmic side of the membrane. A helical membrane pass occupies residues 160–180 (YLAPFGIGMSLFISALCAGPY). Over 181–204 (TGASLNPARTLGPAIVANQYGRAH) the chain is Extracellular. Positions 186-188 (NPA) match the NPA 2 motif. A helical transmembrane segment spans residues 205–225 (WIYYVGPTLGSLLAAGYWHIL). The Cytoplasmic portion of the chain corresponds to 226 to 276 (RILNIDVVDLKNVLNKCKKCGKEDPRISLKHCEECLKDDPKPEKYDIESQN).

Belongs to the MIP/aquaporin (TC 1.A.8) family.

It is found in the cell membrane. The enzyme catalyses H2O(in) = H2O(out). With respect to regulation, polyethylene glycol (PEG) stimulates whereas glycerol inhibits the aquaporin activity. In terms of biological role, water channel required to facilitate the transport of water across membranes. Stimulates plant drought tolerance by facilitating the transport of water from the arbuscular mycorrhiza fungus to host plants. This Rhizophagus irregularis (Arbuscular mycorrhizal fungus) protein is Aquaporin-1.